The sequence spans 367 residues: Probable cysteine protease RD19D (367 aa).

An N-terminal signal peptide occupies residues 1 to 22 (MVAKALAQLITCIILFCHVVAS). Residues 23 to 136 (VEDLTIRQVT…AEAPMVEVDG (114 aa)) constitute a propeptide, activation peptide. Asparagine 61 carries N-linked (GlcNAc...) asparagine glycosylation. 2 disulfides stabilise this stretch: cysteine 158/cysteine 208 and cysteine 192/cysteine 241. Cysteine 161 is a catalytic residue. N-linked (GlcNAc...) asparagine glycosylation occurs at asparagine 254. Cysteine 297 and cysteine 352 form a disulfide bridge. Active-site residues include histidine 304 and asparagine 331.

The protein belongs to the peptidase C1 family.

Functionally, probable thiol protease. In Arabidopsis thaliana (Mouse-ear cress), this protein is Probable cysteine protease RD19D.